The chain runs to 478 residues: NADH-quinone oxidoreductase subunit N (478 aa).

14 consecutive transmembrane segments (helical) span residues 5–25 (LASP…VGVA), 37–57 (MLTL…ALGL), 68–88 (FAVM…VLSL), 99–119 (FEFP…VSAS), 121–141 (FMTL…LAAF), 156–176 (FVLG…IYGF), 199–219 (LTVG…AAPF), 231–251 (PTPV…AMML), 268–288 (VVAL…IGQT), 293–313 (LMAY…AAGS), 320–340 (LLIY…CILA), 365–385 (ALLL…SGFF), 401–421 (LLWG…YYYL), and 446–466 (VVAV…APIL).

The protein belongs to the complex I subunit 2 family. In terms of assembly, NDH-1 is composed of 14 different subunits. Subunits NuoA, H, J, K, L, M, N constitute the membrane sector of the complex.

It is found in the cell inner membrane. The catalysed reaction is a quinone + NADH + 5 H(+)(in) = a quinol + NAD(+) + 4 H(+)(out). Its function is as follows. NDH-1 shuttles electrons from NADH, via FMN and iron-sulfur (Fe-S) centers, to quinones in the respiratory chain. The immediate electron acceptor for the enzyme in this species is believed to be ubiquinone. Couples the redox reaction to proton translocation (for every two electrons transferred, four hydrogen ions are translocated across the cytoplasmic membrane), and thus conserves the redox energy in a proton gradient. The protein is NADH-quinone oxidoreductase subunit N of Granulibacter bethesdensis (strain ATCC BAA-1260 / CGDNIH1).